The sequence spans 286 residues: Orotidine 5'-phosphate decarboxylase (286 aa).

Residues Asp-35, 57 to 59, 89 to 98, Tyr-239, and Arg-257 each bind substrate; these read KTH and DRKFADIGNT. The Proton donor role is filled by Lys-91.

It belongs to the OMP decarboxylase family.

The catalysed reaction is orotidine 5'-phosphate + H(+) = UMP + CO2. It participates in pyrimidine metabolism; UMP biosynthesis via de novo pathway; UMP from orotate: step 2/2. The chain is Orotidine 5'-phosphate decarboxylase (URA3) from Yarrowia lipolytica (strain CLIB 122 / E 150) (Yeast).